Here is a 422-residue protein sequence, read N- to C-terminus: MSDNGPQSNQRSAPRITFGGPTDSTDNNQNGGRNGARPKQRRPQGLPNNTASWFTALTQHGKEELRFPRGQGVPINTNSGPDDQIGYYRRATRRVRGGDGKMKELSPRWYFYYLGTGPEASLPYGANKEGIVWVATEGALNTPKDHIGTRNPNNNAATVLQLPQGTTLPKGFYAEGSRGGSQASSRSSSRSRGNSRNSTPGSSRGNSPARMASGGGETALALLLLDRLNQLESKVSGKGQQQQGQTVTKKSAAEASKKPRQKRTATKQYNVTQAFGRRGPEQTQGNFGDQDLIRQGTDYKHWPQIAQFAPSASAFFGMSRIGMEVTPSGTWLTYHGAIKLDDKDPQFKDNVILLNKHIDAYKTFPPTEPKKDKKKKTDEAQPLPQRQKKQPTVTLLPAADMDDFSRQLQNSMSGASADSTQA.

2 stretches are compositionally biased toward polar residues: residues 1-12 (MSDNGPQSNQRS) and 22-31 (TDSTDNNQNG). The segment at 1-52 (MSDNGPQSNQRSAPRITFGGPTDSTDNNQNGGRNGARPKQRRPQGLPNNTAS) is disordered. 2 RNA-binding regions span residues 42–187 (RPQG…SSRS) and 45–181 (GLPN…RGGS). In terms of domain architecture, CoV N NTD spans 49–176 (NTASWFTALT…TLPKGFYAEG (128 aa)). RNA is bound by residues R93, R108, and R150. Disordered stretches follow at residues 167–214 (TLPK…MASG), 234–287 (KVSG…QGNF), and 362–422 (KTFP…STQA). Phosphoserine; by host is present on S177. The tract at residues 177–204 (SRGGSQASSRSSSRSRGNSRNSTPGSSR) is SR region. Low complexity-rich tracts occupy residues 180 to 207 (GSQA…RGNS) and 234 to 250 (KVSG…VTKK). In terms of domain architecture, CoV N CTD spans 248-365 (TKKSAAEASK…KHIDAYKTFP (118 aa)). Positions 257-265 (KKPRQKRTA) match the Nuclear localization signal motif. The segment at 259-362 (PRQKRTATKQ…LLNKHIDAYK (104 aa)) is dimerization. Basic and acidic residues predominate over residues 368–379 (EPKKDKKKKTDE). Over residues 406-422 (RQLQNSMSGASADSTQA) the composition is skewed to polar residues.

The protein belongs to the betacoronavirus nucleocapsid protein family. As to quaternary structure, homooligomer. Both monomeric and oligomeric forms interact with RNA. Interacts with protein M. Interacts with protein E. May bind to host HNRNPA1. Interacts with NSP3; this interaction serves to tether the genome to the newly translated replicase-transcriptase complex at a very early stage of infection. May interact with host SMAD3. Interacts with host PPIA/CYPA. Post-translationally, proteolytically cleaved by host CASP6. The cleavage leads to two fragments and facilitates viral replication by inhibiting host IFN signaling. The two fragments may interact with IRF3 inhibiting its nuclear translocation after activation and reduce the expression of IFNB and IFN-stimulated genes. In terms of processing, ADP-ribosylated. The ADP-ribosylation is retained in the virion during infection. Phosphorylated on serine and threonine residues. Phosphorylated by host GSK3A and GSK3B. Phosphorylation allows recruitment of host RNA helicase DDX1 which facilitates template readthrough and enables longer subgenomic mRNA synthesis. This promotes the solubility of homodimers that would otherwise aggregate. Host phosphatase would dephosphorylate the protein during assembly at M bound membranes.

It is found in the virion. The protein localises to the host endoplasmic reticulum-Golgi intermediate compartment. The protein resides in the host Golgi apparatus. Its subcellular location is the host cytoplasm. It localises to the host perinuclear region. It is found in the host nucleus. Packages the positive strand viral genome RNA into a helical ribonucleocapsid (RNP) and plays a fundamental role during virion assembly through its interactions with the viral genome and membrane protein M. Plays an important role in enhancing the efficiency of subgenomic viral RNA transcription as well as viral replication. May modulate transforming growth factor-beta signaling by binding host SMAD3. The protein is Nucleoprotein of Severe acute respiratory syndrome coronavirus (SARS-CoV).